A 735-amino-acid chain; its full sequence is F-box and leucine-rich repeat protein 13 (735 aa).

Residues 152 to 198 (KCDISLLPERAILQIFFYLSLKDVIICGQVNHAWMLMTQLNSLWNAI) enclose the F-box domain. LRR repeat units lie at residues 230-254 (GCLLRPKTFRSVSHCRNLQELNVSD), 255-280 (CPTFTDESMRHISEGCPGVLCLNLSN), 281-305 (TTITNRTMRLLPRHFHNLQNLSLAY), 306-333 (CRRFTDKGLQYLNLGNGCHKLIYLDLSG), 334-359 (CTQISVQGFRYIANSCTGIMHLTIND), 360-385 (MPTLTDNCVKALVEKCSRITSLVFTG), 386-406 (APHISDCTFRALSACKLRKIR), 410-435 (NKRVTDASFKFIDKNYPNLSHIYMAD), 436-460 (CKGITDSSLRSLSPLKQLTVLNLAN), 461-488 (CVRIGDMGLKQFLDGPASMRIRELNLSN), 489-514 (CVRLSDASVMKLSERCPNLNYLSLRN), 515-538 (CEHLTAQGIGYIVNIFSLVSIDLS), 539-563 (GTDISNEGLNVLSRHKKLKELSVSE), 564-589 (CYRITDDGIQAFCKSSLILEHLDVSY), 590-615 (CSQLSDMIIKALAIYCINLTSLSIAG), 616-641 (CPKITDSAMEMLSAKCHYLHILDISG), and 642-667 (CVLLTDQILEDLQIGCKQLRILKMQY). Polar residues predominate over residues 682–692 (KVQQQEYNTND). Positions 682-703 (KVQQQEYNTNDPPRWFGYDREG) are disordered.

This sequence belongs to the DRC6 family. In terms of assembly, component of the nexin-dynein regulatory complex (N-DRC). Directly interacts with SKP1 and CUL1. Interacts with TCTE1/DRC5.

The protein localises to the cytoplasm. It localises to the cytoskeleton. The protein resides in the flagellum axoneme. Its subcellular location is the microtubule organizing center. It is found in the centrosome. Substrate-recognition component of the SCF (SKP1-CUL1-F-box protein)-type E3 ubiquitin ligase complex. Component of the nexin-dynein regulatory complex (N-DRC), a key regulator of ciliary/flagellar motility which maintains the alignment and integrity of the distal axoneme and regulates microtubule sliding in motile axonemes. Specifically targets CEP192 isoform 3 for ubiquitin-mediated proteolysis and thereby acts as a regulator of microtubule nucleation activity. This is F-box and leucine-rich repeat protein 13 (FBXL13) from Homo sapiens (Human).